Here is a 57-residue protein sequence, read N- to C-terminus: Potassium channel toxin KTx1 (57 aa).

Residues 1–13 (FLVLLLVSLMCYA) form the signal peptide. Positions 14–18 (EIAEG) are excised as a propeptide. Disulfide bonds link C24-C37, C30-C42, and C36-C51.

Belongs to the scorpion calcin-like family. KTX subfamily. In terms of tissue distribution, expressed by the venom gland.

It localises to the secreted. Functionally, this recombinant peptide inhibits voltage-gated potassium channels mKv1.3/KCNA3 (IC(50)=1.70 uM), mKv1.1/KCNA1 (10 uM inhibits 40% of currents) and hKv1.2/KCNA2 (10 uM inhibits 42% of currents). May also increase intracellular calcium release through the activation of nuclear inositol 1,4,5-trisphosphate receptors (ITPR) of cardiomyocytes, thereby causing an increase in the contraction frequency of these cells. The chain is Potassium channel toxin KTx1 from Isometrus maculatus (Lesser brown scorpion).